We begin with the raw amino-acid sequence, 1108 residues long: Retinal guanylyl cyclase 2 (1108 aa).

The first 50 residues, 1–50 (MFLGPWPFSRLLSWFAISSRLSGQHGLPSSKFLRCLCLLALLPLLRWGQA), serve as a signal peptide directing secretion. The Extracellular portion of the chain corresponds to 51–469 (LPYKIGVIGP…CQGGIDPALA (419 aa)). Cys104 and Cys132 form a disulfide bridge. Residues 470–490 (MMVCFALLIALLSINGFAYFI) traverse the membrane as a helical segment. Over 491–1108 (RRRINKIQLI…AERQLVRNKP (618 aa)) the chain is Cytoplasmic. The Protein kinase domain maps to 532–812 (FQIISEVQSG…DEIFNQFKTF (281 aa)). The 131-residue stretch at 884–1014 (TLYFSDIVGF…DTVNTASRME (131 aa)) folds into the Guanylate cyclase domain.

The protein belongs to the adenylyl cyclase class-4/guanylyl cyclase family. Homodimer. Interacts with RD3; promotes the exit of GUCY2F from the endoplasmic reticulum and its trafficking to the photoreceptor outer segments. Post-translationally, there are 9 conserved cysteine residues in sensory guanylate cyclases, 6 in the extracellular domain, which may be involved in intra- or interchain disulfide bonds. As to expression, retina.

It localises to the membrane. The protein resides in the photoreceptor outer segment membrane. The catalysed reaction is GTP = 3',5'-cyclic GMP + diphosphate. Its activity is regulated as follows. Activated by GUCA1B when free calcium ions concentration is low, and inhibited by GUCA1B when free calcium ions concentration is high. Inhibited by RD3. Its function is as follows. Responsible for the synthesis of cyclic GMP (cGMP) in rods and cones of photoreceptors. Plays an essential role in phototransduction, by mediating cGMP replenishment. May also participate in the trafficking of membrane-asociated proteins to the photoreceptor outer segment membrane. This Mus musculus (Mouse) protein is Retinal guanylyl cyclase 2.